Consider the following 273-residue polypeptide: Large ribosomal subunit protein uL2 (273 aa).

The segment at 228-273 is disordered; sequence VDHPHGGGEGKTSGGRHPVTPWGFPTKGKKTRKNKRTSKFIVKKRK. Over residues 254 to 273 the composition is skewed to basic residues; it reads KGKKTRKNKRTSKFIVKKRK.

The protein belongs to the universal ribosomal protein uL2 family. Part of the 50S ribosomal subunit. Forms a bridge to the 30S subunit in the 70S ribosome.

In terms of biological role, one of the primary rRNA binding proteins. Required for association of the 30S and 50S subunits to form the 70S ribosome, for tRNA binding and peptide bond formation. It has been suggested to have peptidyltransferase activity; this is somewhat controversial. Makes several contacts with the 16S rRNA in the 70S ribosome. The protein is Large ribosomal subunit protein uL2 of Rickettsia felis (strain ATCC VR-1525 / URRWXCal2) (Rickettsia azadi).